The chain runs to 199 residues: ATP-dependent Clp protease proteolytic subunit 2 (199 aa).

Ser98 (nucleophile) is an active-site residue. Residue His123 is part of the active site.

Belongs to the peptidase S14 family. As to quaternary structure, fourteen ClpP subunits assemble into 2 heptameric rings which stack back to back to give a disk-like structure with a central cavity, resembling the structure of eukaryotic proteasomes.

The protein resides in the cytoplasm. It catalyses the reaction Hydrolysis of proteins to small peptides in the presence of ATP and magnesium. alpha-casein is the usual test substrate. In the absence of ATP, only oligopeptides shorter than five residues are hydrolyzed (such as succinyl-Leu-Tyr-|-NHMec, and Leu-Tyr-Leu-|-Tyr-Trp, in which cleavage of the -Tyr-|-Leu- and -Tyr-|-Trp bonds also occurs).. Cleaves peptides in various proteins in a process that requires ATP hydrolysis. Has a chymotrypsin-like activity. Plays a major role in the degradation of misfolded proteins. The polypeptide is ATP-dependent Clp protease proteolytic subunit 2 (Treponema pallidum (strain Nichols)).